Reading from the N-terminus, the 310-residue chain is N-acetyl-gamma-glutamyl-phosphate reductase (310 aa).

Cys117 is a catalytic residue.

Belongs to the NAGSA dehydrogenase family. Type 2 subfamily.

The protein localises to the cytoplasm. It catalyses the reaction N-acetyl-L-glutamate 5-semialdehyde + phosphate + NADP(+) = N-acetyl-L-glutamyl 5-phosphate + NADPH + H(+). It functions in the pathway amino-acid biosynthesis; L-arginine biosynthesis; N(2)-acetyl-L-ornithine from L-glutamate: step 3/4. Its function is as follows. Catalyzes the NADPH-dependent reduction of N-acetyl-5-glutamyl phosphate to yield N-acetyl-L-glutamate 5-semialdehyde. The sequence is that of N-acetyl-gamma-glutamyl-phosphate reductase from Brucella abortus (strain S19).